A 192-amino-acid polypeptide reads, in one-letter code: Ribosomal RNA small subunit methyltransferase G (192 aa).

S-adenosyl-L-methionine-binding positions include Gly63, Phe68, 112–113 (IE), and Arg125.

This sequence belongs to the methyltransferase superfamily. RNA methyltransferase RsmG family.

The protein localises to the cytoplasm. It catalyses the reaction guanosine(527) in 16S rRNA + S-adenosyl-L-methionine = N(7)-methylguanosine(527) in 16S rRNA + S-adenosyl-L-homocysteine. Functionally, specifically methylates the N7 position of guanine in position 527 of 16S rRNA. In Rickettsia bellii (strain OSU 85-389), this protein is Ribosomal RNA small subunit methyltransferase G.